We begin with the raw amino-acid sequence, 607 residues long: DNA mismatch repair protein MutL (607 aa).

The protein belongs to the DNA mismatch repair MutL/HexB family.

This protein is involved in the repair of mismatches in DNA. It is required for dam-dependent methyl-directed DNA mismatch repair. May act as a 'molecular matchmaker', a protein that promotes the formation of a stable complex between two or more DNA-binding proteins in an ATP-dependent manner without itself being part of a final effector complex. The polypeptide is DNA mismatch repair protein MutL (Anaeromyxobacter sp. (strain K)).